The chain runs to 298 residues: S-adenosylmethionine-dependent nucleotide dehydratase (298 aa).

The Radical SAM core domain maps to 8–235 (ANKELVVNWH…QRFGEIIYAE (228 aa)). Residues C22, C26, and C29 each contribute to the [4Fe-4S] cluster site.

It belongs to the radical SAM superfamily. Viperin family. The cofactor is [4Fe-4S] cluster.

The catalysed reaction is CTP + AH2 + S-adenosyl-L-methionine = 3'-deoxy-3',4'-didehydro-CTP + 5'-deoxyadenosine + L-methionine + A + H2O + H(+). It catalyses the reaction UTP + AH2 + S-adenosyl-L-methionine = 3'-deoxy-3',4'-didehydro-UTP + 5'-deoxyadenosine + L-methionine + A + H2O + H(+). Expression of pVip8 in E.coli (strain MG1655) confers resistance to phages lambda, P1, SECphi8 and T7. Prevents culture collapse upon infection with T7. Catalyzes the conversion of cytidine triphosphate (CTP) to 3'-deoxy-3',4'-didehydro-CTP (ddhCTP) and uridine triphosphate (UTP) to 3'-deoxy-3',4'-didehydro-UTP (ddhUTP), probably via a SAM-dependent radical mechanism. The modified nucleotides repress transcription from T7 RNA polymerase-directed genes (possibly by acting as chain terminators), strongly suggesting these nucleotides block viral polymerase transcription. The sequence is that of S-adenosylmethionine-dependent nucleotide dehydratase from Psychrobacter lutiphocae (strain DSM 21542 / CCUG 56590 / IMMIB L-1110).